Consider the following 528-residue polypeptide: Major facilitator superfamily multidrug transporter mdr3 (528 aa).

The segment at 1–37 is disordered; the sequence is MLAMAASAEETNRQSNAGRRSVISPSEAPPEAEQSDV. 7 helical membrane-spanning segments follow: residues 50–70, 91–111, 119–139, 149–169, 180–200, 211–231, and 241–261; these read FILILCSTQLFVQGAFGYILI, WHVGGYSLTVGTFILIAGKLG, ILVLGWAWFGVWSVIGGCSAF, ARALQGIGPALLLPNALAIAG, MIFSAFAVAAPLGCFTAGVVG, WVMWTYSIGCFIIAAVGLWVI, and AATLQFDYIGSVLGVAGLLLL. An N-linked (GlcNAc...) asparagine glycan is attached at Asn-262. The next 5 helical transmembrane spans lie at 272–292, 340–360, 375–395, 410–430, and 448–468; these read GWSTPYVYVLLIGGFLVLGLF, VITSGWLMAIACAAFLGGCIL, FWSFVIMAWGMDISFPASTTI, SLVNTVINYSIAIGLGIAGTV, and ALWSSVGLAALAFGIALVFAV.

The protein belongs to the major facilitator superfamily.

The protein localises to the cell membrane. Functionally, major facilitator superfamily transporter that confers resistance to azoles such as itraconazole. The protein is Major facilitator superfamily multidrug transporter mdr3 of Aspergillus fumigatus (strain ATCC MYA-4609 / CBS 101355 / FGSC A1100 / Af293) (Neosartorya fumigata).